We begin with the raw amino-acid sequence, 252 residues long: 2-succinyl-6-hydroxy-2,4-cyclohexadiene-1-carboxylate synthase (252 aa).

Belongs to the AB hydrolase superfamily. MenH family. As to quaternary structure, monomer.

The catalysed reaction is 5-enolpyruvoyl-6-hydroxy-2-succinyl-cyclohex-3-ene-1-carboxylate = (1R,6R)-6-hydroxy-2-succinyl-cyclohexa-2,4-diene-1-carboxylate + pyruvate. It functions in the pathway quinol/quinone metabolism; 1,4-dihydroxy-2-naphthoate biosynthesis; 1,4-dihydroxy-2-naphthoate from chorismate: step 3/7. Its pathway is quinol/quinone metabolism; menaquinone biosynthesis. Catalyzes a proton abstraction reaction that results in 2,5-elimination of pyruvate from 2-succinyl-5-enolpyruvyl-6-hydroxy-3-cyclohexene-1-carboxylate (SEPHCHC) and the formation of 2-succinyl-6-hydroxy-2,4-cyclohexadiene-1-carboxylate (SHCHC). This Shigella flexneri serotype 5b (strain 8401) protein is 2-succinyl-6-hydroxy-2,4-cyclohexadiene-1-carboxylate synthase.